Consider the following 474-residue polypeptide: Alpha-galactosidase (474 aa).

A signal peptide spans 1–22; that stretch reads MINFSLLTSIVLLASKVVGVSP. 2 disulfides stabilise this stretch: Cys43–Cys75 and Cys122–Cys152. Asn44 carries N-linked (GlcNAc...) asparagine glycosylation. Residues Asp73, Asp74, and Lys148 each coordinate substrate. The Nucleophile role is filled by Asp150. N-linked (GlcNAc...) asparagine glycosylation occurs at Asn176. Arg206 serves as a coordination point for substrate. Asp210 acts as the Proton donor in catalysis. 2 cysteine pairs are disulfide-bonded: Cys222/Cys238 and Cys224/Cys231. Gln252 serves as a coordination point for substrate. N-linked (GlcNAc...) asparagine glycans are attached at residues Asn271, Asn414, Asn423, Asn436, and Asn455.

This sequence belongs to the glycosyl hydrolase 27 family. Homotetramer.

Its subcellular location is the secreted. The enzyme catalyses Hydrolysis of terminal, non-reducing alpha-D-galactose residues in alpha-D-galactosides, including galactose oligosaccharides, galactomannans and galactolipids.. The protein is Alpha-galactosidase (MEL) of Torulaspora delbrueckii (Yeast).